The sequence spans 161 residues: Glutaredoxin-2, mitochondrial (161 aa).

Residues 1–19 (MLWRRAALAGTRLVWSRSG) constitute a mitochondrion transit peptide. Residue S20 is modified to Phosphoserine. Residues 54–154 (VNQIQETISD…PLVHQCYLKK (101 aa)) form the Glutaredoxin domain. Position 65 (C65) interacts with [2Fe-2S] cluster. Position 71 (K71) interacts with glutathione. C74 carries the S-glutathionyl cysteine; alternate modification. C74 and C77 are oxidised to a cystine. 2 residues coordinate glutathione: Q106 and V118. C150 provides a ligand contact to [2Fe-2S] cluster.

The protein belongs to the glutaredoxin family. Monomer; active form. Homodimer; inactive form. The homodimer is probably linked by 1 2Fe-2S cluster.

It is found in the mitochondrion. With respect to regulation, the 2Fe-2S present in the homodimer leads to inactivation of the enzyme. The 2Fe-2S may serve as a redox sensor: the presence of one-electron oxidants or reductants leading to the loss of the 2Fe-2S cluster, subsequent monomerization and activation of the enzyme. In terms of biological role, glutathione-dependent oxidoreductase that facilitates the maintenance of mitochondrial redox homeostasis upon induction of apoptosis by oxidative stress. Involved in response to hydrogen peroxide and regulation of apoptosis caused by oxidative stress. Acts as a very efficient catalyst of monothiol reactions because of its high affinity for protein glutathione-mixed disulfides. Can receive electrons not only from glutathione (GSH), but also from thioredoxin reductase supporting both monothiol and dithiol reactions. Efficiently catalyzes both glutathionylation and deglutathionylation of mitochondrial complex I, which in turn regulates the superoxide production by the complex. Overexpression decreases the susceptibility to apoptosis and prevents loss of cardiolipin and cytochrome c release. This Pongo abelii (Sumatran orangutan) protein is Glutaredoxin-2, mitochondrial (GLRX2).